A 2531-amino-acid chain; its full sequence is Neurogenic locus notch homolog protein 1 (2531 aa).

The N-terminal stretch at 1–18 (MPRLLTPLLCLTLLPALA) is a signal peptide. Residues 19–1725 (ARGLRCSQPS…VEPPLPSQLH (1707 aa)) lie on the Extracellular side of the membrane. 4 EGF-like domains span residues 20–58 (RGLRCSQPSGTCLNGGRCEVANGTEACVCSGAFVGQRCQ), 59–99 (DSNP…PLCL), 102–139 (LDNACLANPCRNGGTCDLLTLTEYKCRCPPGWSGKSCQ), and 140–176 (QADPCASNPCANGGQCLPFESSYICRCPPGFHGPTCR). 32 disulfide bridges follow: Cys-24–Cys-37, Cys-31–Cys-46, Cys-63–Cys-74, Cys-68–Cys-87, Cys-89–Cys-98, Cys-106–Cys-117, Cys-111–Cys-127, Cys-129–Cys-138, Cys-144–Cys-155, Cys-149–Cys-164, Cys-166–Cys-175, Cys-182–Cys-195, Cys-189–Cys-204, Cys-206–Cys-215, Cys-222–Cys-233, Cys-227–Cys-243, Cys-245–Cys-254, Cys-261–Cys-272, Cys-266–Cys-281, Cys-283–Cys-292, Cys-299–Cys-312, Cys-306–Cys-321, Cys-323–Cys-332, Cys-339–Cys-350, Cys-344–Cys-359, Cys-361–Cys-370, Cys-376–Cys-387, Cys-381–Cys-398, Cys-400–Cys-409, Cys-416–Cys-429, Cys-423–Cys-438, and Cys-440–Cys-449. O-linked (Glc...) serine glycosylation is present at Ser-65. Thr-73 carries an O-linked (Fuc...) threonine glycan. O-linked (Fuc...) threonine glycosylation occurs at Thr-116. O-linked (Glc...) serine glycosylation is present at Ser-146. The 39-residue stretch at 178 to 216 (DVNECSQNPGLCRHGGTCHNEIGSYRCACRATHTGPHCE) folds into the EGF-like 5; calcium-binding domain. A glycan (O-linked (Fuc...) threonine) is linked at Thr-194. The EGF-like 6 domain maps to 218–255 (PYVPCSPSPCQNGGTCRPTGDTTHECACLPGFAGQNCE). Residue Thr-232 is glycosylated (O-linked (Fuc...) threonine; alternate). Residue Thr-232 is glycosylated (O-linked (GalNAc...) threonine; alternate). The EGF-like 7; calcium-binding domain occupies 257–293 (NVDDCPGNNCKNGGACVDGVNTYNCRCPPEWTGQYCT). The EGF-like 8; calcium-binding domain occupies 295 to 333 (DVDECQLMPNACQNGGTCHNTHGGYNCVCVNGWTGEDCS). O-linked (Fuc...) threonine glycosylation is present at Thr-311. The EGF-like 9; calcium-binding domain occupies 335-371 (NIDDCASAACFQGATCHDRVASFYCECPHGRTGLLCH). The O-linked (Glc...) serine glycan is linked to Ser-341. O-linked (Fuc...) threonine glycosylation occurs at Thr-349. Residues 372–410 (LNDACISNPCNEGSNCDTNPVNGKAICTCPSGYTGPACS) form the EGF-like 10; calcium-binding domain. O-linked (Glc...) serine glycosylation is present at Ser-378. The EGF-like 11; calcium-binding domain maps to 412 to 450 (DVDECALGANPCEHAGKCLNTLGSFECQCLQGYTGPRCE). Positions 420–421 (AN) are interaction with DLL4. 2 residues coordinate Ca(2+): Thr-432 and Ser-435. O-linked (Glc...) serine glycosylation occurs at Ser-435. The interval 448–452 (RCEID) is interaction with DLL4. Residues Asp-452, Val-453, and Glu-455 each contribute to the Ca(2+) site. An EGF-like 12; calcium-binding domain is found at 452-488 (DVNECISNPCQNDATCLDQIGEFQCICMPGYEGVYCE). 3 disulfide bridges follow: Cys-456/Cys-467, Cys-461/Cys-476, and Cys-478/Cys-487. Ser-458 is a glycosylation site (O-linked (Glc...) serine). A glycan (O-linked (Fuc...) threonine) is linked at Thr-466. Ca(2+) is bound by residues Asp-469 and Gln-470. Residues Asn-490, Thr-491, and Glu-493 each contribute to the Ca(2+) site. In terms of domain architecture, EGF-like 13; calcium-binding spans 490 to 526 (NTDECASSPCLHNGHCMDKINEFQCQCPKGFNGHLCQ). Cystine bridges form between Cys-494–Cys-505, Cys-499–Cys-514, Cys-516–Cys-525, Cys-532–Cys-543, Cys-537–Cys-552, Cys-554–Cys-563, Cys-570–Cys-580, Cys-575–Cys-589, Cys-591–Cys-600, Cys-607–Cys-618, Cys-612–Cys-627, Cys-629–Cys-638, Cys-645–Cys-655, Cys-650–Cys-664, Cys-666–Cys-675, Cys-682–Cys-693, Cys-687–Cys-702, Cys-704–Cys-713, Cys-720–Cys-730, Cys-725–Cys-739, Cys-741–Cys-750, Cys-757–Cys-768, Cys-762–Cys-777, Cys-779–Cys-788, Cys-795–Cys-806, Cys-800–Cys-815, Cys-817–Cys-826, Cys-833–Cys-844, Cys-838–Cys-855, Cys-857–Cys-866, Cys-873–Cys-884, Cys-878–Cys-893, Cys-895–Cys-904, Cys-911–Cys-922, Cys-916–Cys-931, Cys-933–Cys-942, Cys-949–Cys-960, Cys-954–Cys-969, Cys-971–Cys-980, Cys-987–Cys-998, Cys-992–Cys-1007, Cys-1009–Cys-1018, Cys-1025–Cys-1036, Cys-1030–Cys-1045, Cys-1047–Cys-1056, Cys-1063–Cys-1074, Cys-1068–Cys-1083, Cys-1085–Cys-1094, Cys-1101–Cys-1122, Cys-1116–Cys-1131, Cys-1133–Cys-1142, Cys-1149–Cys-1160, Cys-1154–Cys-1169, Cys-1171–Cys-1180, Cys-1187–Cys-1198, Cys-1192–Cys-1207, Cys-1209–Cys-1218, Cys-1225–Cys-1244, Cys-1238–Cys-1253, Cys-1255–Cys-1264, Cys-1271–Cys-1284, Cys-1276–Cys-1293, Cys-1295–Cys-1304, Cys-1311–Cys-1322, Cys-1316–Cys-1334, Cys-1336–Cys-1345, Cys-1352–Cys-1363, Cys-1357–Cys-1372, Cys-1374–Cys-1383, Cys-1391–Cys-1403, Cys-1397–Cys-1414, Cys-1416–Cys-1425, Cys-1449–Cys-1472, Cys-1454–Cys-1467, and Cys-1463–Cys-1479. An O-linked (Glc...) serine glycan is attached at Ser-496. Ca(2+)-binding residues include Asp-507 and Lys-508. The 37-residue stretch at 528–564 (DVDECASTPCKNGAKCLDGPNTYTCVCTEGYTGTHCE) folds into the EGF-like 14; calcium-binding domain. An O-linked (Glc...) serine glycan is attached at Ser-534. Residues 566 to 601 (DIDECDPDPCHYGSCKDGVATFTCLCQPGYTGHHCE) enclose the EGF-like 15; calcium-binding domain. An EGF-like 16; calcium-binding domain is found at 603-639 (NINECHSQPCRHGGTCQDRDNSYLCLCLKGTTGPNCE). Ser-609 carries O-linked (Glc...) serine glycosylation. Thr-617 is a glycosylation site (O-linked (Fuc...) threonine). Residues 641-676 (NLDDCASNPCDSGTCLDKIDGYECACEPGYTGSMCN) form the EGF-like 17; calcium-binding domain. O-linked (Glc...) serine glycosylation is present at Ser-647. Residues 678–714 (NIDECAGSPCHNGGTCEDGIAGFTCRCPEGYHDPTCL) enclose the EGF-like 18; calcium-binding domain. Thr-692 is a glycosylation site (O-linked (Fuc...) threonine). The 36-residue stretch at 716-751 (EVNECNSNPCIHGACRDGLNGYKCDCAPGWSGTNCD) folds into the EGF-like 19; calcium-binding domain. Residue Ser-722 is glycosylated (O-linked (Glc...) serine). One can recognise an EGF-like 20; calcium-binding domain in the interval 753–789 (NNNECESNPCVNGGTCKDMTSGYVCTCREGFSGPNCQ). Residue Ser-759 is glycosylated (O-linked (Glc...) serine). A glycan (O-linked (Fuc...) threonine) is linked at Thr-767. Ser-784 carries O-linked (GlcNAc) serine glycosylation. Residues 791–827 (NINECASNPCLNQGTCIDDVAGYKCNCPLPYTGATCE) form the EGF-like 21; calcium-binding domain. Residue Ser-797 is glycosylated (O-linked (Glc...) serine). A glycan (O-linked (Fuc...) threonine) is linked at Thr-805. The region spanning 829–867 (VLAPCATSPCKNSGVCKESEDYESFSCVCPTGWQGQTCE) is the EGF-like 22 domain. An EGF-like 23; calcium-binding domain is found at 869–905 (DINECVKSPCRHGASCQNTNGSYRCLCQAGYTGRNCE). A glycan (N-linked (GlcNAc...) asparagine) is linked at Asn-888. O-linked (GlcNAc) threonine glycosylation is present at Thr-900. The EGF-like 24 domain occupies 907 to 943 (DIDDCRPNPCHNGGSCTDGINTAFCDCLPGFQGAFCE). Ser-921 is a glycosylation site (O-linked (Fuc) serine). The EGF-like 25; calcium-binding domain occupies 945–981 (DINECASNPCQNGANCTDCVDSYTCTCPVGFNGIHCE). O-linked (Glc...) serine glycosylation is present at Ser-951. A glycan (N-linked (GlcNAc...) asparagine) is linked at Asn-959. The 37-residue stretch at 983-1019 (NTPDCTESSCFNGGTCVDGINSFTCLCPPGFTGSYCQ) folds into the EGF-like 26 domain. O-linked (Fuc...) threonine glycosylation is present at Thr-997. Residues 1021 to 1057 (DVNECDSRPCLHGGTCQDSYGTYKCTCPQGYTGLNCQ) enclose the EGF-like 27; calcium-binding domain. O-linked (Glc...) serine glycosylation occurs at Ser-1027. An O-linked (Fuc...) threonine glycan is attached at Thr-1035. EGF-like domains are found at residues 1059–1095 (LVRWCDSAPCKNGGRCWQTNTQYHCECRSGWTGVNCD) and 1097–1143 (LSVS…SYCE). O-linked (Glc...) serine glycosylation is present at Ser-1065. The region spanning 1145-1181 (EVDECSPNPCQNGATCTDYLGGFSCKCVAGYHGSNCS) is the EGF-like 30; calcium-binding domain. O-linked (Fuc...) threonine glycosylation occurs at Thr-1159. Residue Asn-1179 is glycosylated (N-linked (GlcNAc...) asparagine). Residues 1183 to 1219 (EINECLSQPCQNGGTCIDLTNSYKCSCPRGTQGVHCE) form the EGF-like 31; calcium-binding domain. The O-linked (Glc...) serine glycan is linked to Ser-1189. The O-linked (Fuc...) threonine glycan is linked to Thr-1197. Residues 1221-1265 (NVDDCHPPLDPASRSPKCFNNGTCVDQVGGYTCTCPPGFVGERCE) form the EGF-like 32; calcium-binding domain. A glycan (N-linked (GlcNAc...) asparagine) is linked at Asn-1241. EGF-like domains are found at residues 1267–1305 (DVNECLSNPCDPRGTQNCVQRVNDFHCECRAGHTGRRCE), 1307–1346 (VINGCRGKPCKNGGVCAVASNTARGFICRCPAGFEGATCE), 1348–1384 (DARTCGSLRCLNGGTCISGPRSPTCLCLGSFTGPECQ), and 1387–1426 (ASSPCVGSNPCYNQGTCEPTSENPFYRCLCPAKFNGLLCH). Ser-1273 is a glycosylation site (O-linked (Glc...) serine). The O-linked (Fuc...) threonine glycan is linked to Thr-1362. O-linked (GlcNAc...) threonine glycosylation occurs at Thr-1379. O-linked (Fuc...) threonine; alternate glycosylation occurs at Thr-1402. Residue Thr-1402 is glycosylated (O-linked (GalNAc...) threonine; alternate). LNR repeat units lie at residues 1449–1489 (CELP…PWKN), 1490–1531 (CTQS…CNPL), and 1532–1571 (YDQYCKDHFSDGHCDQGCNSAECEWDGLDCAEHVPERLAA). Residues Asp-1457, Asn-1460, Asp-1475, and Asp-1478 each contribute to the Ca(2+) site. Residue Asn-1489 is glycosylated (N-linked (GlcNAc...) asparagine). Disulfide bonds link Cys-1490–Cys-1514, Cys-1496–Cys-1509, Cys-1505–Cys-1521, Cys-1536–Cys-1549, and Cys-1545–Cys-1561. Asn-1587 carries N-linked (GlcNAc...) asparagine glycosylation. Residues 1718-1750 (PPLPSQLHLMYVAAAAFVLLFFVGCGVLLSRKR) are interaction with PSEN1. Residues 1726 to 1746 (LMYVAAAAFVLLFFVGCGVLL) form a helical membrane-spanning segment. Over 1747-2531 (SRKRRRQHGQ…QITHIPEAFK (785 aa)) the chain is Cytoplasmic. Residue Lys-1749 forms a Glycyl lysine isopeptide (Lys-Gly) (interchain with G-Cter in ubiquitin) linkage. The segment at 1770-1798 (KKKRREPLGEDSVGLKPLKNASDGALMDD) is disordered. Position 1851 is a phosphothreonine (Thr-1851). 5 ANK repeats span residues 1917 to 1946 (TGETALHLAARYSRSDAAKRLLEASADANI), 1950 to 1980 (MGRTPLHAAVSADAQGVFQILLRNRATDLDA), 1984 to 2013 (DGTTPLILAARLAVEGMLEDLINSHADVNA), 2017 to 2046 (LGKSALHWAAAVNNVDAAVVLLKNGANKDM), and 2050 to 2079 (KEETPLFLAAREGSYETAKVLLDHFANRDI). The segment at 1937 to 1945 (LLEASADAN) is HIF1AN-binding. Asn-1945 carries the post-translational modification (3S)-3-hydroxyasparagine; by HIF1AN; partial. The segment at 2004-2012 (LINSHADVN) is HIF1AN-binding. Asn-2012 carries the (3S)-3-hydroxyasparagine; by HIF1AN; partial modification. 3 disordered regions span residues 2140–2185 (KSAT…DSSS), 2382–2428 (QPQN…SLPV), and 2440–2531 (PTSL…EAFK). Positions 2382-2395 (QPQNLQPPSQPHLS) are enriched in low complexity. Polar residues predominate over residues 2440–2478 (PTSLPSSMVPPMTTTQFLTPPSQHSYSSSPVDNTPSHQL). Positions 2488–2503 (PSPESPDQWSSSSPHS) are enriched in low complexity. Polar residues predominate over residues 2504–2524 (NISDWSEGISSPPTTMPSQIT).

Belongs to the NOTCH family. In terms of assembly, heterodimer of a C-terminal fragment N(TM) and an N-terminal fragment N(EC) which are probably linked by disulfide bonds. Interacts with DNER, DTX1, DTX2 and RBPJ/RBPSUH. Also interacts with MAML1, MAML2 and MAML3 which act as transcriptional coactivators for NOTCH1. Notch 1 intracellular domain interacts with SNW1; the interaction involves multimerized NOTCH1 NICD and is implicated in a formation of an intermediate preactivation complex which associates with DNA-bound CBF-1/RBPJ. The activated membrane-bound form interacts with AAK1 which promotes NOTCH1 stabilization. Forms a trimeric complex with FBXW7 and SGK1. Interacts with HIF1AN. HIF1AN negatively regulates the function of notch intracellular domain (NICD), accelerating myogenic differentiation. Interacts (via NICD) with SNAI1 (via zinc fingers); the interaction induces SNAI1 degradation via MDM2-mediated ubiquitination and inhibits SNAI1-induced cell invasion. Interacts (via NICD) with MDM2A. Interacts (via NICD) with BCL6; the interaction decreases MAML1 recruitment by NOTCH1 NICD on target genes DNA and inhibits NOTCH1 transactivation activity. Interacts with THBS4. Interacts (via the EGF-like repeat region) with CCN3 (via CTCK domain). Interacts (via EGF-like domains) with DLL4 (via N-terminal DSL and MNNL domains). Interacts with ZMIZ1. Interacts (via NICD domain) with MEGF10 (via the cytoplasmic domain). Interacts with DLL1 and JAG1. Interacts (via NICD domain) with PRAG1. Forms a complex with PRAG1, N1ICD and MAML1, in a MAML1-dependent manner. Interacts (via transmembrane region) with PSEN1; the interaction is direct. Interacts with ZFP64. In terms of processing, synthesized in the endoplasmic reticulum as an inactive form which is proteolytically cleaved by a furin-like convertase in the trans-Golgi network before it reaches the plasma membrane to yield an active, ligand-accessible form. Cleavage results in a C-terminal fragment N(TM) and a N-terminal fragment N(EC). Following ligand binding, it is cleaved by ADAM17 to yield a membrane-associated intermediate fragment called notch extracellular truncation (NEXT). Following endocytosis, this fragment is then cleaved by one of the catalytic subunits of gamma-secretase (PSEN1 or PSEN2) to release a Notch-derived peptide containing the intracellular domain (NICD) from the membrane. Post-translationally, phosphorylated. O-linked glycosylation by GALNT11 is involved in determination of left/right symmetry: glycosylation promotes activation of NOTCH1, possibly by promoting cleavage by ADAM17, modulating the balance between motile and immotile (sensory) cilia at the left-right organiser (LRO). O-glycosylated on the EGF-like domains. O-glucosylated at Ser-435 by KDELC1 and KDELC2. Contains both O-linked fucose and O-linked glucose in the EGF-like domains 11, 12 and 13, which are interacting with the residues on DLL4. O-glycosylation at Ser-1027 is only partial. MFNG-, RFNG- and LFNG-mediated modification of O-fucose residues at specific EGF-like domains results in inhibition of its activation by JAG1 and enhancement of its activation by DLL1 via an increased binding to DLL1. In terms of processing, ubiquitinated. Undergoes 'Lys-29'-linked polyubiquitination by ITCH; promotes the lysosomal degradation of non-activated internalized NOTCH1. Deubiquitination by USP12 is required for transport of internalized non-activated receptor from late endosomes to lysosomes for degradation. Monoubiquitination at Lys-1749 is required for activation by gamma-secretase cleavage, it promotes interaction with AAK1, which stabilizes it. Deubiquitination by EIF3F is necessary for nuclear import of activated Notch. Post-translationally, hydroxylated at Asn-1945 and Asn-2012 by HIF1AN. Hydroxylation reduces affinity for HI1AN and may thus indirectly modulate negative regulation of NICD. In terms of tissue distribution, highly expressed in the brain, lung and thymus. Expressed at lower levels in the spleen, bone-marrow, spinal cord, eyes, mammary gland, liver, intestine, skeletal muscle, kidney and heart. In the hair follicle, highly expressed exclusively in the epithelial compartment.

It is found in the cell membrane. Its subcellular location is the late endosome membrane. The protein localises to the nucleus. Functionally, functions as a receptor for membrane-bound ligands Jagged-1 (JAG1), Jagged-2 (JAG2) and Delta-1 (DLL1) to regulate cell-fate determination. Upon ligand activation through the released notch intracellular domain (NICD) it forms a transcriptional activator complex with RBPJ/RBPSUH and activates genes of the enhancer of split locus. Affects the implementation of differentiation, proliferation and apoptotic programs. Involved in angiogenesis; negatively regulates endothelial cell proliferation and migration and angiogenic sprouting. Involved in the maturation of both CD4(+) and CD8(+) cells in the thymus. Important for follicular differentiation and possibly cell fate selection within the follicle. During cerebellar development, functions as a receptor for neuronal DNER and is involved in the differentiation of Bergmann glia. Represses neuronal and myogenic differentiation. May play an essential role in postimplantation development, probably in some aspect of cell specification and/or differentiation. May be involved in mesoderm development, somite formation and neurogenesis. May enhance HIF1A function by sequestering HIF1AN away from HIF1A. Required for the THBS4 function in regulating protective astrogenesis from the subventricular zone (SVZ) niche after injury. Involved in determination of left/right symmetry by modulating the balance between motile and immotile (sensory) cilia at the left-right organiser (LRO). This Mus musculus (Mouse) protein is Neurogenic locus notch homolog protein 1 (Notch1).